The primary structure comprises 206 residues: Small ribosomal subunit protein uS5 (206 aa).

Residues 1–15 are compositionally biased toward polar residues; the sequence is MTDTPTKQEIQSKND. The interval 1-50 is disordered; the sequence is MTDTPTKQEIQSKNDNVPGATPVEQKKNNRNDRKRNRRGDSKNLERDSDW. A compositionally biased stretch (basic and acidic residues) spans 38-50; that stretch reads RGDSKNLERDSDW. In terms of domain architecture, S5 DRBM spans 50–113; it reads WQERVVQIRR…SDGKKNLVRV (64 aa).

Belongs to the universal ribosomal protein uS5 family. In terms of assembly, part of the 30S ribosomal subunit. Contacts proteins S4 and S8.

With S4 and S12 plays an important role in translational accuracy. Its function is as follows. Located at the back of the 30S subunit body where it stabilizes the conformation of the head with respect to the body. This is Small ribosomal subunit protein uS5 from Prochlorococcus marinus (strain MIT 9301).